Reading from the N-terminus, the 348-residue chain is Phosphate acyltransferase (348 aa).

It belongs to the PlsX family. Homodimer. Probably interacts with PlsY.

The protein localises to the cytoplasm. It catalyses the reaction a fatty acyl-[ACP] + phosphate = an acyl phosphate + holo-[ACP]. Its pathway is lipid metabolism; phospholipid metabolism. In terms of biological role, catalyzes the reversible formation of acyl-phosphate (acyl-PO(4)) from acyl-[acyl-carrier-protein] (acyl-ACP). This enzyme utilizes acyl-ACP as fatty acyl donor, but not acyl-CoA. This Neisseria gonorrhoeae (strain ATCC 700825 / FA 1090) protein is Phosphate acyltransferase.